The sequence spans 520 residues: GMP synthase [glutamine-hydrolyzing] (520 aa).

The 198-residue stretch at 3 to 200 (AIAIIDFGSQ…FLDIANCKRD (198 aa)) folds into the Glutamine amidotransferase type-1 domain. Residue Cys-84 is the Nucleophile of the active site. Catalysis depends on residues His-175 and Glu-177. In terms of domain architecture, GMPS ATP-PPase spans 201 to 386 (WTMKSFIEEQ…IGLSDEIIFQ (186 aa)). Residue 228–234 (SGGVDSS) coordinates ATP.

In terms of assembly, homodimer.

The enzyme catalyses XMP + L-glutamine + ATP + H2O = GMP + L-glutamate + AMP + diphosphate + 2 H(+). The protein operates within purine metabolism; GMP biosynthesis; GMP from XMP (L-Gln route): step 1/1. Its function is as follows. Catalyzes the synthesis of GMP from XMP. The protein is GMP synthase [glutamine-hydrolyzing] of Wolbachia pipientis wMel.